A 140-amino-acid polypeptide reads, in one-letter code: Midkine (140 aa).

The signal sequence occupies residues 1–20 (MQHRSFFLLALVALLAVTTA). 5 disulfide bridges follow: Cys34–Cys58, Cys42–Cys67, Cys49–Cys71, Cys81–Cys113, and Cys91–Cys123.

The protein belongs to the pleiotrophin family. In terms of assembly, homodimer. Interacts with ALK. Interacts with LRP1; promotes neuronal survival. Interacts with LRP2. Interacts with NCAM1. Interacts (via C-terminal) with PTPRZ1 (via chondroitin sulfate chains); this interaction is inhibited by PTN; this interaction promotes neuronal migration. Interacts with NCL; this interaction promotes NCL clustering and lateral movements of this complex into lipid rafts leading to MDK internalization. Interacts with LRP6 and LRP8: this interaction is calcium dependent. Interacts with ITGA4. Interacts with ITGA6. Interacts with ITGB1. Interacts with ITGA4:ITGB1 complex; this interaction mediates MDK-induced osteoblast cells migration through PXN phosphorylation. Interacts with ITGA6:ITGB1 complex; this interaction mediates MDK-induced neurite outgrowth. Interacts with NOTCH2; this interactio mediates a nuclear accumulation of NOTCH2 and therefore activation of NOTCH2 signaling leading to interaction between HES1 and STAT3. Interacts with GPC2 (via heparan sulfate chain); this interaction is inhibited by heparin followed by chondroitin sulfate E; this interaction induces GPC2 clustering through heparan sulfate chain; this interaction induces neuronal cell adhesion and neurite outgrowth. Interacts with SDC3; this interaction induces SDC3 clustering; this interaction induces neuronal cell adhesion and neurite outgrowth. Interacts with SDC1. Interacts with CSPG5; this interaction promotes elongation of oligodendroglial precursor-like cells. Expressed at a low level in arteries, and at higher levels in newly formed neointima. In brain, expressed in the caudate nucleus and the brain stem.

It localises to the secreted. In terms of biological role, developmentally regulated, secreted growth factor homologous to pleiotrophin (PTN), which has heparin binding activity. Binds anaplastic lymphoma kinase (ALK) which induces ALK activation and subsequent phosphorylation of the insulin receptor substrate (IRS1), followed by the activation of mitogen-activated protein kinase (MAPK) and PI3-kinase, and the induction of cell proliferation. Involved in neointima formation after arterial injury, possibly by mediating leukocyte recruitment. Also involved in early fetal adrenal gland development. Its function is as follows. Secreted protein that functions as a cytokine and growth factor and mediates its signal through cell-surface proteoglycan and non-proteoglycan receptors. Binds cell-surface proteoglycan receptors via their chondroitin sulfate (CS) groups. Thereby regulates many processes like inflammatory response, cell proliferation, cell adhesion, cell growth, cell survival, tissue regeneration, cell differentiation and cell migration. Participates in inflammatory processes by exerting two different activities. Firstly, mediates neutrophils and macrophages recruitment to the sites of inflammation both by direct action by cooperating namely with ITGB2 via LRP1 and by inducing chemokine expression. This inflammation can be accompanied by epithelial cell survival and smooth muscle cell migration after renal and vessel damage, respectively. Secondly, suppresses the development of tolerogenic dendric cells thereby inhibiting the differentiation of regulatory T cells and also promote T cell expansion through NFAT signaling and Th1 cell differentiation. Promotes tissue regeneration after injury or trauma. After heart damage negatively regulates the recruitment of inflammatory cells and mediates cell survival through activation of anti-apoptotic signaling pathways via MAPKs and AKT pathways through the activation of angiogenesis. Also facilitates liver regeneration as well as bone repair by recruiting macrophage at trauma site and by promoting cartilage development by facilitating chondrocyte differentiation. Plays a role in brain by promoting neural precursor cells survival and growth through interaction with heparan sulfate proteoglycans. Binds PTPRZ1 and promotes neuronal migration and embryonic neurons survival. Binds SDC3 or GPC2 and mediates neurite outgrowth and cell adhesion. Binds chondroitin sulfate E and heparin leading to inhibition of neuronal cell adhesion induced by binding with GPC2. Binds CSPG5 and promotes elongation of oligodendroglial precursor-like cells. Also binds ITGA6:ITGB1 complex; this interaction mediates MDK-induced neurite outgrowth. Binds LRP1; promotes neuronal survival. Binds ITGA4:ITGB1 complex; this interaction mediates MDK-induced osteoblast cells migration through PXN phosphorylation. Binds anaplastic lymphoma kinase (ALK) which induces ALK activation and subsequent phosphorylation of the insulin receptor substrate (IRS1), followed by the activation of mitogen-activated protein kinase (MAPK) and PI3-kinase, and the induction of cell proliferation. Promotes epithelial to mesenchymal transition through interaction with NOTCH2. During arteriogenesis, plays a role in vascular endothelial cell proliferation by inducing VEGFA expression and release which in turn induces nitric oxide synthase expression. Moreover activates vasodilation through nitric oxide synthase activation. Negatively regulates bone formation in response to mechanical load by inhibiting Wnt/beta-catenin signaling in osteoblasts. In addition plays a role in hippocampal development, working memory, auditory response, early fetal adrenal gland development and the female reproductive system. The polypeptide is Midkine (Rattus norvegicus (Rat)).